Reading from the N-terminus, the 64-residue chain is uncharacterized protein (64 aa).

The protein to P.abyssi PAB3148.

This is an uncharacterized protein from Archaeoglobus fulgidus (strain ATCC 49558 / DSM 4304 / JCM 9628 / NBRC 100126 / VC-16).